Reading from the N-terminus, the 1127-residue chain is Nck-associated protein 1-like (1127 aa).

The disordered stretch occupies residues 638–670 (KAKNKKTRKQRQTPRKGEPERDKPGAESHRKNR). Basic residues predominate over residues 639-651 (AKNKKTRKQRQTP). A compositionally biased stretch (basic and acidic residues) spans 652 to 666 (RKGEPERDKPGAESH). A helical transmembrane segment spans residues 996–1016 (VACLLLIFLAVSLPLLATDPS).

The protein belongs to the HEM-1/HEM-2 family. As to quaternary structure, in hematopoietic cells, component of the WAVE2 complex composed of ABI1, CYFIP1/SRA1, NCKAP1L/HEM1 and WASF2/WAVE2. Interacts with ARHGAP4, PIK3C3/VPS34 and PPP1R12A/MYPT1. Interacts with mammalian target of rapamycin complex 2 (mTORC2) components, including MTOR and RICTOR. In terms of tissue distribution, expressed only in cells of hematopoietic origin. Expressed in neutrophils (at protein level). Expressed in T-cells (at protein level).

Its subcellular location is the cell membrane. It localises to the cytoplasm. In terms of biological role, essential hematopoietic-specific regulator of the actin cytoskeleton. Controls lymphocyte development, activation, proliferation and homeostasis, erythrocyte membrane stability, as well as phagocytosis and migration by neutrophils and macrophages. Component of the WAVE2 complex which signals downstream of RAC to stimulate F-actin polymerization. Required for stabilization and/or translation of the WAVE2 complex proteins in hematopoietic cells. Within the WAVE2 complex, enables the cortical actin network to restrain excessive degranulation and granule release by T-cells. Required for efficient T-lymphocyte and neutrophil migration. Exhibits complex cycles of activation and inhibition to generate waves of propagating the assembly with actin. Also involved in mechanisms WAVE-independent to regulate myosin and actin polymerization during neutrophil chemotaxis. In T-cells, required for proper mechanistic target of rapamycin complex 2 (mTORC2)-dependent AKT phosphorylation, cell proliferation and cytokine secretion, including that of IL2 and TNF. The chain is Nck-associated protein 1-like from Homo sapiens (Human).